Consider the following 313-residue polypeptide: N-acetyl-gamma-glutamyl-phosphate reductase (313 aa).

The active site involves Cys-117.

Belongs to the NAGSA dehydrogenase family. Type 2 subfamily.

The protein resides in the cytoplasm. The enzyme catalyses N-acetyl-L-glutamate 5-semialdehyde + phosphate + NADP(+) = N-acetyl-L-glutamyl 5-phosphate + NADPH + H(+). It functions in the pathway amino-acid biosynthesis; L-arginine biosynthesis; N(2)-acetyl-L-ornithine from L-glutamate: step 3/4. In terms of biological role, catalyzes the NADPH-dependent reduction of N-acetyl-5-glutamyl phosphate to yield N-acetyl-L-glutamate 5-semialdehyde. This is N-acetyl-gamma-glutamyl-phosphate reductase from Burkholderia cenocepacia (strain ATCC BAA-245 / DSM 16553 / LMG 16656 / NCTC 13227 / J2315 / CF5610) (Burkholderia cepacia (strain J2315)).